Consider the following 393-residue polypeptide: S-adenosylmethionine synthase (393 aa).

Position 16 (histidine 16) interacts with ATP. Aspartate 18 serves as a coordination point for Mg(2+). K(+) is bound at residue glutamate 44. L-methionine is bound by residues glutamate 57 and glutamine 100. Residues 100–110 (QSNDIAQGVDH) form a flexible loop region. ATP-binding positions include 167–169 (DAK), 238–239 (RF), aspartate 247, 253–254 (RK), alanine 270, and lysine 274. Residue aspartate 247 participates in L-methionine binding. An L-methionine-binding site is contributed by lysine 278.

Belongs to the AdoMet synthase family. Homotetramer; dimer of dimers. Mg(2+) serves as cofactor. Requires K(+) as cofactor.

It localises to the cytoplasm. The catalysed reaction is L-methionine + ATP + H2O = S-adenosyl-L-methionine + phosphate + diphosphate. Its pathway is amino-acid biosynthesis; S-adenosyl-L-methionine biosynthesis; S-adenosyl-L-methionine from L-methionine: step 1/1. Catalyzes the formation of S-adenosylmethionine (AdoMet) from methionine and ATP. The overall synthetic reaction is composed of two sequential steps, AdoMet formation and the subsequent tripolyphosphate hydrolysis which occurs prior to release of AdoMet from the enzyme. The chain is S-adenosylmethionine synthase from Albidiferax ferrireducens (strain ATCC BAA-621 / DSM 15236 / T118) (Rhodoferax ferrireducens).